An 84-amino-acid polypeptide reads, in one-letter code: Conophysin-R (84 aa).

7 disulfides stabilise this stretch: cysteine 6–cysteine 46, cysteine 9–cysteine 20, cysteine 14–cysteine 36, cysteine 21–cysteine 26, cysteine 53–cysteine 71, cysteine 65–cysteine 83, and cysteine 72–cysteine 77.

As to expression, expressed by the venom duct.

It localises to the secreted. In terms of biological role, targets vasopressin-oxytocin related receptors. No effect observed when injected into goldfish or into mice. The chain is Conophysin-R from Conus radiatus (Rayed cone).